The chain runs to 252 residues: Phosphate import ATP-binding protein PstB (252 aa).

Positions Ile-6–Ile-247 constitute an ABC transporter domain. Residue Gly-38–Ser-45 participates in ATP binding.

The protein belongs to the ABC transporter superfamily. Phosphate importer (TC 3.A.1.7) family. The complex is composed of two ATP-binding proteins (PstB), two transmembrane proteins (PstC and PstA) and a solute-binding protein (PstS).

The protein resides in the cell membrane. The enzyme catalyses phosphate(out) + ATP + H2O = ADP + 2 phosphate(in) + H(+). Functionally, part of the ABC transporter complex PstSACB involved in phosphate import. Responsible for energy coupling to the transport system. The chain is Phosphate import ATP-binding protein PstB from Heliobacterium mobile (Heliobacillus mobilis).